The primary structure comprises 385 residues: Isocitrate dehydrogenase [NAD] subunit beta, mitochondrial (385 aa).

The N-terminal 34 residues, 1–34 (MAALSGVRWLTRALVSAGNPGAWRGLSTSAAAHA), are a transit peptide targeting the mitochondrion. Lysine 199 carries the post-translational modification N6-acetyllysine.

It belongs to the isocitrate and isopropylmalate dehydrogenases family. As to quaternary structure, heterooligomer of subunits alpha (IDH3A), beta (IDH3B), and gamma (IDH3G) in the apparent ratio of 2:1:1. The heterodimer containing one IDH3A and one IDH3B subunit and the heterodimer containing one IDH3A and one IDH3G subunit assemble into a heterotetramer (which contains two subunits of IDH3A, one of IDH3B and one of IDH3G) and further into the heterooctamer.

It is found in the mitochondrion. The heterotetramer and the heterodimer composed of IDH3A and IDH3G subunits can be allosterically activated by citrate (CIT) or/and ADP, and the two activators can act independently or synergistically. The heterodimer composed of IDH3A and IDH3B subunits cannot be allosterically regulated and the allosteric regulation of the heterotetramer is through the IDH3G subunit and not the IDH3B subunit. The IDH3G subunit contains the allosteric site which consists of a CIT-binding site and an ADP-binding site, and the binding of CIT and ADP causes conformational changes at the allosteric site which are transmitted to the active site in the catalytic subunit (IDH3A) through a cascade of conformational changes at the heterodimer interface, leading to stabilization of the isocitrate-binding at the active site and thus activation of the enzyme. ATP can activate the heterotetramer and the heterodimer composed of IDH3A and IDH3G subunits at low concentrations but inhibits their activities at high concentrations, whereas ATP exhibits only inhibitory effect on the heterodimer composed of IDH3A and IDH3B subunits. Functionally, plays a structural role to facilitate the assembly and ensure the full activity of the enzyme catalyzing the decarboxylation of isocitrate (ICT) into alpha-ketoglutarate. The heterodimer composed of the alpha (IDH3A) and beta (IDH3B) subunits and the heterodimer composed of the alpha (IDH3A) and gamma (IDH3G) subunits, have considerable basal activity but the full activity of the heterotetramer (containing two subunits of IDH3A, one of IDH3B and one of IDH3G) requires the assembly and cooperative function of both heterodimers. This is Isocitrate dehydrogenase [NAD] subunit beta, mitochondrial (IDH3B) from Macaca fascicularis (Crab-eating macaque).